Reading from the N-terminus, the 146-residue chain is D-aminoacyl-tRNA deacylase (146 aa).

Positions 137–138 (GP) match the Gly-cisPro motif, important for rejection of L-amino acids motif.

It belongs to the DTD family. Homodimer.

The protein resides in the cytoplasm. The catalysed reaction is glycyl-tRNA(Ala) + H2O = tRNA(Ala) + glycine + H(+). It catalyses the reaction a D-aminoacyl-tRNA + H2O = a tRNA + a D-alpha-amino acid + H(+). An aminoacyl-tRNA editing enzyme that deacylates mischarged D-aminoacyl-tRNAs. Also deacylates mischarged glycyl-tRNA(Ala), protecting cells against glycine mischarging by AlaRS. Acts via tRNA-based rather than protein-based catalysis; rejects L-amino acids rather than detecting D-amino acids in the active site. By recycling D-aminoacyl-tRNA to D-amino acids and free tRNA molecules, this enzyme counteracts the toxicity associated with the formation of D-aminoacyl-tRNA entities in vivo and helps enforce protein L-homochirality. The polypeptide is D-aminoacyl-tRNA deacylase (Thermodesulfovibrio yellowstonii (strain ATCC 51303 / DSM 11347 / YP87)).